The primary structure comprises 129 residues: MDTLKLEIVTPEGLIFQGDVKSVTFPGEEGEFGVLPKHASLLSLLKPGVIEIELPDGKKESIVINWGHVNVSENQATALVEGAVPLEGTTESEIAKKIEEAKKLIESASENKAALATVEARIEKAAKIV.

The protein belongs to the ATPase epsilon chain family. In terms of assembly, F-type ATPases have 2 components, CF(1) - the catalytic core - and CF(0) - the membrane proton channel. CF(1) has five subunits: alpha(3), beta(3), gamma(1), delta(1), epsilon(1). CF(0) has three main subunits: a, b and c.

It is found in the cell inner membrane. Its function is as follows. Produces ATP from ADP in the presence of a proton gradient across the membrane. The sequence is that of ATP synthase epsilon chain from Nitratiruptor sp. (strain SB155-2).